We begin with the raw amino-acid sequence, 285 residues long: Protein phosphatase 1 regulatory subunit 3C (285 aa).

Residues lysine 72–phenylalanine 75 carry the PP1-binding motif motif. A CBM21 domain is found at arginine 133–valine 241.

Interacts with PPP1CC catalytic subunit of PP1 and associates with glycogen. Forms complexes with glycogen phosphorylase, glycogen synthase and phosphorylase kinase which is necessary for its regulation of PP1 activity. In terms of tissue distribution, ubiquitously expressed in the examined tissues including brain, muscle, liver and spleen under normoxic condition. Its expression is higher in insulin sensitive tissues (liver and muscle) than in the brain and spleen. Significantly increased expression in the liver and muscle under short-term (1-12 hours) hypoxia exposure. Significantly increased expression after long-term (natural) hypoxia exposure in liver and spleen. No significant differences in expression in brain for any time periods.

Its function is as follows. Acts as a glycogen-targeting subunit for PP1 and regulates its activity. Activates glycogen synthase, reduces glycogen phosphorylase activity and limits glycogen breakdown. This is Protein phosphatase 1 regulatory subunit 3C from Clarias batrachus (Walking catfish).